Reading from the N-terminus, the 521-residue chain is 2,3-bisphosphoglycerate-independent phosphoglycerate mutase 2 (521 aa).

Positions 20 and 70 each coordinate Mn(2+). Catalysis depends on S70, which acts as the Phosphoserine intermediate. Substrate contacts are provided by residues H131, 161–162 (RD), R193, R199, 270–273 (RPDR), and K343. Mn(2+) contacts are provided by D410, H414, D451, H452, and H470.

This sequence belongs to the BPG-independent phosphoglycerate mutase family. The cofactor is Mn(2+).

It carries out the reaction (2R)-2-phosphoglycerate = (2R)-3-phosphoglycerate. The protein operates within carbohydrate degradation; glycolysis; pyruvate from D-glyceraldehyde 3-phosphate: step 3/5. In terms of biological role, catalyzes the interconversion of 2-phosphoglycerate and 3-phosphoglycerate. The sequence is that of 2,3-bisphosphoglycerate-independent phosphoglycerate mutase 2 from Methanosarcina acetivorans (strain ATCC 35395 / DSM 2834 / JCM 12185 / C2A).